The chain runs to 228 residues: Eukaryotic translation initiation factor 6 (228 aa).

This sequence belongs to the eIF-6 family. As to quaternary structure, monomer. Associates with the 60S ribosomal subunit.

It localises to the cytoplasm. The protein localises to the nucleus. Its subcellular location is the nucleolus. Its function is as follows. Binds to the 60S ribosomal subunit and prevents its association with the 40S ribosomal subunit to form the 80S initiation complex in the cytoplasm. May also be involved in ribosome biogenesis. This Guillardia theta (Cryptophyte) protein is Eukaryotic translation initiation factor 6.